A 359-amino-acid polypeptide reads, in one-letter code: Very-long-chain (3R)-3-hydroxyacyl-CoA dehydratase (359 aa).

Residues 1 to 144 are Cytoplasmic-facing; it reads MSALTPHVYW…RKDPFLGLKK (144 aa). In terms of domain architecture, CS spans 3–92; the sequence is ALTPHVYWAQ…QEEVWWNRLT (90 aa). Positions 109–133 form a coiled coil; the sequence is LDESDAEMELREKEEKINKVSFESR. The helical transmembrane segment at 145-165 threads the bilayer; it reads GFLFMYNLVQFLGYSWIFVNM. Residues 166–186 are Lumenal-facing; the sequence is TVRLFILGQDSFYDTFHTIAD. Residues 187 to 207 form a helical membrane-spanning segment; it reads VMYFCQMLAIMEVINPAVGLV. The Cytoplasmic portion of the chain corresponds to 208 to 209; the sequence is KT. Residues 210-230 traverse the membrane as a helical segment; that stretch reads GVMPAFIQVMGRNFILFVIFG. Topologically, residues 231–239 are lumenal; that stretch reads SLEDMQNKP. A helical transmembrane segment spans residues 240–260; that stretch reads VVFFVFYLWSTIEIFRYPFYM. The Cytoplasmic segment spans residues 261–277; the sequence is LACIDTEWKLLTWLRYT. The helical transmembrane segment at 278–298 threads the bilayer; the sequence is IWMPLYPLGVLAEAVAVIQSI. Residues Y283 and E290 contribute to the active site. At 299–317 the chain is on the lumenal side; it reads PIFDETKLLSIPLPKATGL. Residues 318–338 traverse the membrane as a helical segment; sequence SLSFSYILQLYLVVMFLGLFI. The Cytoplasmic segment spans residues 339-359; that stretch reads NFRHLFKQRTRRFRTKKRKAN.

This sequence belongs to the very long-chain fatty acids dehydratase HACD family.

The protein resides in the endoplasmic reticulum membrane. The catalysed reaction is a very-long-chain (3R)-3-hydroxyacyl-CoA = a very-long-chain (2E)-enoyl-CoA + H2O. It catalyses the reaction (3R)-hydroxyhexadecanoyl-CoA = (2E)-hexadecenoyl-CoA + H2O. It functions in the pathway lipid metabolism; fatty acid biosynthesis. In terms of biological role, catalyzes the third of the four reactions of the long-chain fatty acids elongation cycle. This endoplasmic reticulum-bound enzymatic process, allows the addition of two carbons to the chain of long- and very long-chain fatty acids/VLCFAs per cycle. This enzyme catalyzes the dehydration of the 3-hydroxyacyl-CoA intermediate into trans-2,3-enoyl-CoA, within each cycle of fatty acid elongation. Thereby, it participates in the production of VLCFAs of different chain lengths that are involved in multiple biological processes as precursors of membrane lipids and lipid mediators. Involved in Rac1-signaling pathways leading to the modulation of gene expression. The protein is Very-long-chain (3R)-3-hydroxyacyl-CoA dehydratase of Danio rerio (Zebrafish).